The chain runs to 205 residues: Glycerol-3-phosphate acyltransferase (205 aa).

Helical transmembrane passes span 3-23 (VFAL…SAIL), 53-73 (GVAA…VWLA), 80-100 (PFYL…PVFF), 112-132 (LGAI…TWLL), and 138-158 (GYSS…VWWF).

This sequence belongs to the PlsY family. As to quaternary structure, probably interacts with PlsX.

It localises to the cell inner membrane. It carries out the reaction an acyl phosphate + sn-glycerol 3-phosphate = a 1-acyl-sn-glycero-3-phosphate + phosphate. Its pathway is lipid metabolism; phospholipid metabolism. Catalyzes the transfer of an acyl group from acyl-phosphate (acyl-PO(4)) to glycerol-3-phosphate (G3P) to form lysophosphatidic acid (LPA). This enzyme utilizes acyl-phosphate as fatty acyl donor, but not acyl-CoA or acyl-ACP. The protein is Glycerol-3-phosphate acyltransferase of Erwinia tasmaniensis (strain DSM 17950 / CFBP 7177 / CIP 109463 / NCPPB 4357 / Et1/99).